The sequence spans 123 residues: Probable ketoamine kinase in tonB 3'region (123 aa).

Catalysis depends on D26, which acts as the Proton acceptor.

Belongs to the fructosamine kinase family.

In terms of biological role, ketoamine kinase that phosphorylates ketoamines on the third carbon of the sugar moiety to generate ketoamine 3-phosphate. In Klebsiella pneumoniae, this protein is Probable ketoamine kinase in tonB 3'region.